The following is a 272-amino-acid chain: 3-methyl-2-oxobutanoate hydroxymethyltransferase (272 aa).

Residues aspartate 53 and aspartate 92 each coordinate Mg(2+). Residues 53-54 (DS), aspartate 92, and lysine 120 each bind 3-methyl-2-oxobutanoate. Residue glutamate 122 participates in Mg(2+) binding. Glutamate 189 serves as the catalytic Proton acceptor.

It belongs to the PanB family. In terms of assembly, homodecamer; pentamer of dimers. Mg(2+) serves as cofactor.

Its subcellular location is the cytoplasm. The enzyme catalyses 3-methyl-2-oxobutanoate + (6R)-5,10-methylene-5,6,7,8-tetrahydrofolate + H2O = 2-dehydropantoate + (6S)-5,6,7,8-tetrahydrofolate. It participates in cofactor biosynthesis; (R)-pantothenate biosynthesis; (R)-pantoate from 3-methyl-2-oxobutanoate: step 1/2. In terms of biological role, catalyzes the reversible reaction in which hydroxymethyl group from 5,10-methylenetetrahydrofolate is transferred onto alpha-ketoisovalerate to form ketopantoate. This Ralstonia pickettii (strain 12J) protein is 3-methyl-2-oxobutanoate hydroxymethyltransferase.